The following is a 2646-amino-acid chain: Probable helicase senataxin (2646 aa).

A Phosphoserine modification is found at Ser102. Lys339 participates in a covalent cross-link: Glycyl lysine isopeptide (Lys-Gly) (interchain with G-Cter in SUMO1). Ser640 carries the phosphoserine modification. 2 disordered regions span residues 705-734 and 825-876; these read KISAEKSGKESSSYAPSNSTSRNGPEWGCD and GGAL…DDED. The segment covering 714–727 has biased composition (polar residues); that stretch reads ESSSYAPSNSTSRN. Acidic residues predominate over residues 867 to 876; the sequence is LDNSSSDDED. Phosphoserine occurs at positions 870, 871, 872, 938, 1002, and 1004. The segment at 1001 to 1023 is disordered; that stretch reads ISDSDEEEDEDEDERSSSEENIK. Acidic residues predominate over residues 1003–1014; it reads DSDEEEDEDEDE. Residue Lys1051 forms a Glycyl lysine isopeptide (Lys-Gly) (interchain with G-Cter in SUMO2) linkage. Basic and acidic residues predominate over residues 1122-1133; the sequence is RNKAEGVKEHAG. The disordered stretch occupies residues 1122–1245; that stretch reads RNKAEGVKEH…DTRRGQSKSS (124 aa). Residues 1147-1156 are compositionally biased toward basic residues; that stretch reads GVKKPKRKRY. Residues 1176–1189 are compositionally biased toward basic and acidic residues; sequence LPDRRDLTESDLKS. Over residues 1196–1211 the composition is skewed to polar residues; the sequence is TPSSSVERDSTILQKS. Residues 1212 to 1222 show a composition bias toward basic residues; sequence TKSRTHSKPVR. Residue Ser1318 is modified to Phosphoserine. Glycyl lysine isopeptide (Lys-Gly) (interchain with G-Cter in SUMO2) cross-links involve residues Lys1328, Lys1329, and Lys1398. Ser1472 carries the phosphoserine modification. The residue at position 1474 (Thr1474) is a Phosphothreonine. Residues 1591-1627 form a disordered region; that stretch reads LSKSLESTTLQQSALKNKSSGAQPNLKVTPPSSMGSQ. A compositionally biased stretch (polar residues) spans 1595 to 1613; it reads LESTTLQQSALKNKSSGAQ. 1939–1946 provides a ligand contact to ATP; that stretch reads GPPGTGKS. Positions 2046–2063 match the Bipartite nuclear localization signal motif; it reads KKDLPSHIQEMLRRKEIL. A Phosphothreonine modification is found at Thr2450. Disordered stretches follow at residues 2450 to 2472, 2486 to 2506, and 2569 to 2624; these read THPPATAPEAPRPQGGLPSNRLD, HTPSDTVTSKGPERPLLQDRL, and SHRS…THHV. 2 stretches are compositionally biased toward basic and acidic residues: residues 2496 to 2506 and 2593 to 2608; these read GPERPLLQDRL and KYSDPDAGLSHKREPR. Residues 2632–2646 form a necessary for nuclear localization region; it reads RRRLDDSSAKRRQFL.

Belongs to the DNA2/NAM7 helicase family. Homodimer. Interacts with PER2; the interaction inhibits termination of circadian target genes. Interacts with CHD4, POLR2A, PRKDC and TRIM28. Interacts with UBE2I. Interacts (via N-terminus domain) with EXOSC9 (via C-terminus region); the interaction enhances SETX sumoylation. Interacts with NCL (via N-terminus domain). Interacts with PABPN1, PABPC1 and SF3B1. Interacts with SMN1/SMN2 and POLR2A; SMN1/SMN2 recruits SETX to POLR2A. Post-translationally, ubiquitinated. In terms of processing, sumoylated preferentially with SUMO2 or SUMO3. In terms of tissue distribution, expressed in cerebellum, hippocampus, olfactory bulb, Bergmann glial fibers, stellate cells and Purkinje cells. Expressed in the epithelial cells of the lens but not in mature lens fiber cells. Expressed in the retina (highly expressed in inner and outer segments of photoreceptors and outer plexiform layer cells but weakly expressed in the inner plexiform and ganglion cell layers). Expressed in the kidney.

It localises to the nucleus. It is found in the nucleoplasm. Its subcellular location is the nucleolus. The protein localises to the cytoplasm. The protein resides in the chromosome. It localises to the telomere. It is found in the cell projection. Its subcellular location is the axon. The protein localises to the growth cone. Its function is as follows. Probable RNA/DNA helicase involved in diverse aspects of RNA metabolism and genomic integrity. Plays a role in transcription regulation by its ability to modulate RNA Polymerase II (Pol II) binding to chromatin and through its interaction with proteins involved in transcription. Contributes to the mRNA splicing efficiency and splice site selection. Required for the resolution of R-loop RNA-DNA hybrid formation at G-rich pause sites located downstream of the poly(A) site, allowing XRN2 recruitment and XRN2-mediated degradation of the downstream cleaved RNA and hence efficient RNA polymerase II (RNAp II) transcription termination. Required for the 3' transcriptional termination of PER1 and CRY2, thus playing an important role in the circadian rhythm regulation. Involved in DNA double-strand breaks damage response generated by oxidative stress. In association with RRP45, targets the RNA exosome complex to sites of transcription-induced DNA damage. Plays a role in the development and maturation of germ cells: essential for male meiosis, acting at the interface of transcription and meiotic recombination, and in the process of gene silencing during meiotic sex chromosome inactivation (MSCI). Plays a role in neurite outgrowth in hippocampal cells through FGF8-activated signaling pathways. Inhibits retinoic acid-induced apoptosis. May be involved in telomeric stability through the regulation of telomere repeat-containing RNA (TERRA) transcription. This is Probable helicase senataxin from Mus musculus (Mouse).